A 95-amino-acid chain; its full sequence is uncharacterized protein (95 aa).

The segment at 1-64 (MEIDDIFASK…PKGASGRKRT (64 aa)) is disordered. Basic and acidic residues predominate over residues 18-28 (KSNDSKSEAKA). The segment covering 35-49 (TKSTPSRPKPTNNQD) has biased composition (polar residues).

This is an uncharacterized protein from Schizosaccharomyces pombe (strain 972 / ATCC 24843) (Fission yeast).